The chain runs to 395 residues: Phosphoglycerate kinase (395 aa).

Substrate is bound by residues 21 to 23 (DLN), arginine 36, 59 to 62 (HLGR), arginine 113, and arginine 146. ATP contacts are provided by residues lysine 197, glutamate 324, and 350-353 (GGDT).

This sequence belongs to the phosphoglycerate kinase family. Monomer.

The protein localises to the cytoplasm. The catalysed reaction is (2R)-3-phosphoglycerate + ATP = (2R)-3-phospho-glyceroyl phosphate + ADP. Its pathway is carbohydrate degradation; glycolysis; pyruvate from D-glyceraldehyde 3-phosphate: step 2/5. This Acinetobacter baumannii (strain ACICU) protein is Phosphoglycerate kinase.